The chain runs to 386 residues: Eukaryotic translation initiation factor 3 subunit M (386 aa).

The PCI domain maps to 181 to 343 (NSELASKVMI…RKVHISSTMH (163 aa)).

The protein belongs to the eIF-3 subunit M family. In terms of assembly, component of the eukaryotic translation initiation factor 3 (eIF-3) complex.

It localises to the cytoplasm. Its function is as follows. Component of the eukaryotic translation initiation factor 3 (eIF-3) complex, which is involved in protein synthesis of a specialized repertoire of mRNAs and, together with other initiation factors, stimulates binding of mRNA and methionyl-tRNAi to the 40S ribosome. The eIF-3 complex specifically targets and initiates translation of a subset of mRNAs involved in cell proliferation. The polypeptide is Eukaryotic translation initiation factor 3 subunit M (Aedes aegypti (Yellowfever mosquito)).